The chain runs to 457 residues: tRNA modification GTPase MnmE (457 aa).

Residues arginine 22, glutamate 85, and arginine 124 each coordinate (6S)-5-formyl-5,6,7,8-tetrahydrofolate. Positions 219–378 constitute a TrmE-type G domain; that stretch reads GATVVIAGKP…LKEKIYDLVL (160 aa). Position 229 (asparagine 229) interacts with K(+). GTP-binding positions include 229-234, 248-254, 273-276, and 333-336; these read NTGKSS, TPVPGTT, DTAG, and NKAD. Mg(2+) is bound at residue serine 233. K(+)-binding residues include threonine 248, valine 250, and threonine 253. Threonine 254 is a Mg(2+) binding site. A (6S)-5-formyl-5,6,7,8-tetrahydrofolate-binding site is contributed by lysine 457.

This sequence belongs to the TRAFAC class TrmE-Era-EngA-EngB-Septin-like GTPase superfamily. TrmE GTPase family. As to quaternary structure, homodimer. Heterotetramer of two MnmE and two MnmG subunits. K(+) is required as a cofactor.

It localises to the cytoplasm. Functionally, exhibits a very high intrinsic GTPase hydrolysis rate. Involved in the addition of a carboxymethylaminomethyl (cmnm) group at the wobble position (U34) of certain tRNAs, forming tRNA-cmnm(5)s(2)U34. This is tRNA modification GTPase MnmE from Syntrophus aciditrophicus (strain SB).